A 493-amino-acid polypeptide reads, in one-letter code: Chromosomal replication initiator protein DnaA (493 aa).

Residues 1-105 are domain I, interacts with DnaA modulators; the sequence is MSDTIQQEAP…LMYSIVIDKS (105 aa). The domain II stretch occupies residues 105 to 152; that stretch reads SQGQPVTIELPHQIDAAPAERSVRPEAPGQKASAERERLEIARPRFES. Residues 121–140 are disordered; the sequence is APAERSVRPEAPGQKASAER. Residues 153–370 form a domain III, AAA+ region region; that stretch reads NLNPKYTFST…GCIVKLLAAH (218 aa). ATP is bound by residues Gly-198, Gly-200, Lys-201, and Thr-202. Positions 371–493 are domain IV, binds dsDNA; it reads SLDNQEIDLQ…LRKRIEIMSM (123 aa).

It belongs to the DnaA family. In terms of assembly, oligomerizes as a right-handed, spiral filament on DNA at oriC.

It is found in the cytoplasm. In terms of biological role, plays an essential role in the initiation and regulation of chromosomal replication. ATP-DnaA binds to the origin of replication (oriC) to initiate formation of the DNA replication initiation complex once per cell cycle. Binds the DnaA box (a 9 base pair repeat at the origin) and separates the double-stranded (ds)DNA. Forms a right-handed helical filament on oriC DNA; dsDNA binds to the exterior of the filament while single-stranded (ss)DNA is stabiized in the filament's interior. The ATP-DnaA-oriC complex binds and stabilizes one strand of the AT-rich DNA unwinding element (DUE), permitting loading of DNA polymerase. After initiation quickly degrades to an ADP-DnaA complex that is not apt for DNA replication. Binds acidic phospholipids. This chain is Chromosomal replication initiator protein DnaA, found in Chlorobaculum tepidum (strain ATCC 49652 / DSM 12025 / NBRC 103806 / TLS) (Chlorobium tepidum).